The sequence spans 143 residues: ATP synthase epsilon chain (143 aa).

This sequence belongs to the ATPase epsilon chain family. F-type ATPases have 2 components, CF(1) - the catalytic core - and CF(0) - the membrane proton channel. CF(1) has five subunits: alpha(3), beta(3), gamma(1), delta(1), epsilon(1). CF(0) has three main subunits: a, b and c.

The protein resides in the cell membrane. Its function is as follows. Produces ATP from ADP in the presence of a proton gradient across the membrane. This Lacticaseibacillus casei (strain BL23) (Lactobacillus casei) protein is ATP synthase epsilon chain.